Here is a 145-residue protein sequence, read N- to C-terminus: Holo-[acyl-carrier-protein] synthase (145 aa).

Mg(2+) is bound by residues Asp-8 and Glu-59.

This sequence belongs to the P-Pant transferase superfamily. AcpS family. Mg(2+) is required as a cofactor.

The protein resides in the cytoplasm. It carries out the reaction apo-[ACP] + CoA = holo-[ACP] + adenosine 3',5'-bisphosphate + H(+). Transfers the 4'-phosphopantetheine moiety from coenzyme A to a Ser of acyl-carrier-protein. The protein is Holo-[acyl-carrier-protein] synthase of Granulibacter bethesdensis (strain ATCC BAA-1260 / CGDNIH1).